The sequence spans 1171 residues: ATP-dependent helicase/deoxyribonuclease subunit B (1171 aa).

The UvrD-like helicase ATP-binding domain maps to 1–390; it reads MSLRFVIGRA…HPLVECIRSA (390 aa). 8–15 serves as a coordination point for ATP; the sequence is GRAGSGKS. A UvrD-like helicase C-terminal domain is found at 281–587; that stretch reads MEQPRFHSPA…QFANIPPSLD (307 aa). Residues Cys-805, Cys-1129, Cys-1132, and Cys-1138 each contribute to the [4Fe-4S] cluster site.

This sequence belongs to the helicase family. AddB/RexB type 1 subfamily. Heterodimer of AddA and AddB. Requires Mg(2+) as cofactor. It depends on [4Fe-4S] cluster as a cofactor.

The heterodimer acts as both an ATP-dependent DNA helicase and an ATP-dependent, dual-direction single-stranded exonuclease. Recognizes the chi site generating a DNA molecule suitable for the initiation of homologous recombination. The AddB subunit has 5' -&gt; 3' nuclease activity but not helicase activity. The polypeptide is ATP-dependent helicase/deoxyribonuclease subunit B (Bacillus cereus (strain ZK / E33L)).